A 353-amino-acid chain; its full sequence is Beta-agarase B (353 aa).

An N-terminal signal peptide occupies residues 1 to 17; sequence MYLIYLRLVFCCALLLG. Cys18 is lipidated: N-palmitoyl cysteine. Residue Cys18 is the site of S-diacylglycerol cysteine attachment. A disordered region spans residues 30-58; it reads LPVEQEQEQETEQEGEPEESSEQDLVEEV. The segment covering 32–58 has biased composition (acidic residues); it reads VEQEQEQETEQEGEPEESSEQDLVEEV. Positions 58-353 constitute a GH16 domain; that stretch reads VDWKDIPVPA…WIRIYKPVEK (296 aa). Residues 105-107 and Asp181 contribute to the substrate site; that span reads YHN. Glu184 serves as the catalytic Nucleophile. Glu189 (proton donor) is an active-site residue. Residues His215, Arg219, Asp224, Gln226, and Glu308 each contribute to the substrate site.

It belongs to the glycosyl hydrolase 16 family. In terms of assembly, homodimer.

The protein localises to the cell outer membrane. It carries out the reaction Hydrolysis of (1-&gt;4)-beta-D-galactosidic linkages in agarose, giving the tetramer as the predominant product.. Functionally, cleaves the beta-1,4-linkages between beta-D-galactose and alpha-L-3,6-anhydro-galactose residues in agarose. Cleaves agarose in a random manner with retention of the anomeric-bond configuration, producing beta-anomers that give rise progressively to alpha-anomers when mutarotation takes place. Also tolerant to hybrid substrates containing C6-sulfate groups at the -4, +1, and +3 positions. The chain is Beta-agarase B (agaB) from Zobellia galactanivorans (strain DSM 12802 / CCUG 47099 / CIP 106680 / NCIMB 13871 / Dsij).